Consider the following 203-residue polypeptide: GTP cyclohydrolase 1 (203 aa).

3 residues coordinate Zn(2+): Cys87, His90, and Cys158.

It belongs to the GTP cyclohydrolase I family. In terms of assembly, homomer.

The catalysed reaction is GTP + H2O = 7,8-dihydroneopterin 3'-triphosphate + formate + H(+). The protein operates within cofactor biosynthesis; 7,8-dihydroneopterin triphosphate biosynthesis; 7,8-dihydroneopterin triphosphate from GTP: step 1/1. The protein is GTP cyclohydrolase 1 of Xylella fastidiosa (strain M23).